The sequence spans 471 residues: Nitrosourea synthase (471 aa).

The HO-like stretch occupies residues 177-328 (MWLVQFAPDF…GRMAREKIIK (152 aa)). Residues E189, E215, H225, E281, H311, D315, H318, H407, H409, and H448 each contribute to the Fe(2+) site. The tract at residues 397–459 (VEPRGELSNT…ANIESDECVY (63 aa)) is cupin.

As to quaternary structure, homodimer. It depends on Fe(2+) as a cofactor.

It carries out the reaction N(omega)-methyl-L-arginine + 2 NADH + 3 O2 + H(+) = N(delta)-hydroxy-N(omega)-methyl-N(omega)-nitroso-L-citrulline + 2 NAD(+) + 3 H2O. The enzyme catalyses N(omega)-methyl-L-arginine + NADH + O2 + H(+) = N(delta)-hydroxy-N(omega)-methyl-L-arginine + NAD(+) + H2O. The catalysed reaction is N(delta)-hydroxy-N(omega)-methyl-L-arginine + NADH + O2 = N(delta),N(omega')-dihydroxy-N(omega)-methyl-L-arginine + NAD(+) + H2O. It catalyses the reaction N(delta),N(omega')-dihydroxy-N(omega)-methyl-L-arginine + O2 = N(delta)-hydroxy-N(omega)-methyl-N(omega)-nitroso-L-citrulline + H2O. It carries out the reaction 2 N(delta)-hydroxy-N(omega)-methyl-N(omega)-nitroso-L-citrulline + AH2 = 2 N(delta)-hydroxy-N(omega)-methyl-L-citrulline + 2 nitric oxide + A. It functions in the pathway antibiotic biosynthesis. Functionally, involved in the biosynthesis of the glucosamine-nitrosourea antibiotic streptozotocin (SZN). Catalyzes a complex multi-step reaction: the overall reaction is an oxidative rearrangement of the guanidine group of N(omega)-methyl-L-arginine (L-NMA), generating an N-nitrosourea product. SznF first hydroxylates L-NMA to form N(delta)-hydroxy-N(omega)-methyl-L-arginine (L-HMA), which is further hydroxylated to give N(delta)-hydroxy-N(omega)-hydroxy-N(omega)-methyl-L-arginine (L-DHMA). Subsequently, an oxidative rearrangement converts this intermediate to N(delta)-hydroxy-N(omega)-methyl-N(omega)-nitroso-L-citrulline. This product is unstable, and degrades non-enzymically into nitric oxide and the denitrosated product N(delta)-hydroxy-N(omega)-methyl-L-citrulline. The polypeptide is Nitrosourea synthase (Streptomyces achromogenes subsp. streptozoticus).